The following is a 67-amino-acid chain: VIIIAVLFLTACQLIATASYARSERKHPDLRLSSRNSKLSKRCLGSRELCVRDTSCCSMSCTNNICF.

The signal sequence occupies residues 1-17 (VIIIAVLFLTACQLIAT). The propeptide occupies 18–40 (ASYARSERKHPDLRLSSRNSKLS). 3 disulfides stabilise this stretch: Cys43/Cys57, Cys50/Cys61, and Cys56/Cys66.

This sequence belongs to the conotoxin O1 superfamily. In terms of tissue distribution, expressed by the venom duct.

Its subcellular location is the secreted. This Conus abbreviatus (Abbreviated cone) protein is Conotoxin AbVIO.